A 154-amino-acid polypeptide reads, in one-letter code: Neurotrophin-3 (154 aa).

An N-terminal signal peptide occupies residues 1–18 (MSILFYVMFLAYLRGVQG). Positions 19-134 (NSMDQRSLPE…VNSRSPRRKR (116 aa)) are excised as a propeptide.

Belongs to the NGF-beta family.

The protein resides in the secreted. Functionally, seems to promote the survival of visceral and proprioceptive sensory neurons. This Cervus elaphus (Red deer) protein is Neurotrophin-3 (NTF3).